Consider the following 178-residue polypeptide: Major non-capsid protein (178 aa).

The protein belongs to the tenuiviruses NCP family.

It is found in the host cytoplasm. Functionally, induces the formation of large intracellular inclusion body, organized in amorphous and crystalline arrays. Presumably the main cause of the stripe disease observed in host. The protein is Major non-capsid protein of Rice stripe virus (isolate T) (RSV).